We begin with the raw amino-acid sequence, 197 residues long: MAKIRDPRFKLSRRLGVNIYGHPKAMKRATRENSREGKKLSNYGKQLLEKQKIRSYYGVLEKQFLRYVKKAMKSKERTGDVLLRSLECRLDNIAYRIGFANSIRQARQMVNHGHILVNGSKVNIPSYEVKAGDVITLREKYRKNDEFADNFLSLKKFSLPYIEKDYDKFSGVLIKEPERDEIPIDANETLVVELYSK.

Positions 88 to 151 (CRLDNIAYRI…RKNDEFADNF (64 aa)) constitute an S4 RNA-binding domain.

It belongs to the universal ribosomal protein uS4 family. In terms of assembly, part of the 30S ribosomal subunit. Contacts protein S5. The interaction surface between S4 and S5 is involved in control of translational fidelity.

One of the primary rRNA binding proteins, it binds directly to 16S rRNA where it nucleates assembly of the body of the 30S subunit. Functionally, with S5 and S12 plays an important role in translational accuracy. The protein is Small ribosomal subunit protein uS4B of Clostridium botulinum (strain Langeland / NCTC 10281 / Type F).